Here is a 637-residue protein sequence, read N- to C-terminus: MKTKEEFHRIEISKFTEDLREAFGYKIQYRQDLVLVNIRGCNGAGKSTVPMQMLQTDPGAFMLTLDGKDKATVFPSYGFVAMGRYFSKTGGLDGFKNNEETLKVLKLLWELPFSIIMEGVISSTIFSTYCDLFKELEQRNNPKRAVGVLNLLPPFEVCLERIKKRTPEKFDSIKKDQIEGKWRTVNRNAQKFRDAGVTSWDEDNSVIDINDTVSWFFSSIKNNLQPEFTGLRLGVRFPTEEPVKALKKAEKGVKRGKKGRKTSPVAKTLDDNGDGAFLRSLKREIRPHWDPKYLNTPDDNVRLRRDPETGQTLWDMYFINLVERQNIWYRRVIQGKSKPWTDDPVMSTYHFTNVDRRLDRVTLHYIDKVLCNLEDSYESKKFLLLNTFIYRLFVRPETTDAMGYIFPETFEEDWERAKAALRARRESGEPVFTDAYFVNDLKSANPDRANSSNKTENAIHLIQFIIDHLDELAEFTFNPKNSMEEVIEKFTMIPAVGNFNAYEVALDLGIVKEMTGIDFVDWTPDHYANVGPGCKKGIEYVFEDLGNMSHLDIVFFITSVYKGELERLGLEYKYQEGCKELDLRALEGWCCEMSKYFNYYATERGYDWAKGKRPKKKMNLRTDDVSYLNPRISNLVK.

The disordered stretch occupies residues 249-269 (AEKGVKRGKKGRKTSPVAKTL).

Belongs to the thymidylate kinase family. 5-hmdU DNA kinase subfamily.

The catalysed reaction is 5-hydroxymethyl-dUMP in DNA + ATP = 5-phosphomethyl-dUMP in DNA + ADP + H(+). Its function is as follows. Phosphorylates 5-hydroxymethyluracil (5hmdU) into 5-phosphomethyl-2'-deoxyuridine (5- PmdU) on DNA as a step in the pathway leading to thymidine hypermodifications in the viral genome. The phosphate is added internally to the DNA polymer. As a final result of the pathway of hypermodification, alpha-glutamylthymidine (YdTMP) substitutes for about 20% of the thymidines in the viral DNA, the 80% left are dTMP. These modifications probably prevent degradation of viral genome by the host restriction-modification antiviral defense system. This is 5-hmdU DNA kinase from Bacillus phage SP10 (Bacillus phage SP-10).